A 366-amino-acid polypeptide reads, in one-letter code: Cyanide hydratase (366 aa).

In terms of domain architecture, CN hydrolase spans 6–285; sequence YKAAAVTSEP…DGLMFVDIDL (280 aa). The active-site Proton acceptor is the Glu-46. The active site involves Lys-128. Cys-163 serves as the catalytic Nucleophile.

It belongs to the carbon-nitrogen hydrolase superfamily. Nitrilase family. As to quaternary structure, oligomer of dimers, forming left-handed helical fibers.

The catalysed reaction is formamide = hydrogen cyanide + H2O. Catalyzes the hydration of cyanide to formamide. Degradation of cyanide may be important for plant pathogenic fungi in infection of cyanogenic plants. Can also transform some nitriles like 2-cyanopyridine and fumaronitrile. The protein is Cyanide hydratase of Pyrenophora teres f. teres (strain 0-1) (Barley net blotch fungus).